Reading from the N-terminus, the 626-residue chain is Chaperone protein HtpG (626 aa).

The interval 1–338 (MTANKNQKKT…SNDLPLNVSR (338 aa)) is a; substrate-binding. The segment at 339–553 (EILQDHKLVY…SNEMSTQMAK (215 aa)) is b. Residues 554–626 (LFSAAGQTVP…ARINDLLINN (73 aa)) are c.

This sequence belongs to the heat shock protein 90 family. Homodimer.

Its subcellular location is the cytoplasm. Functionally, molecular chaperone. Has ATPase activity. The sequence is that of Chaperone protein HtpG from Buchnera aphidicola subsp. Baizongia pistaciae (strain Bp).